The following is a 390-amino-acid chain: Lipid-A-disaccharide synthase (390 aa).

This sequence belongs to the LpxB family.

The catalysed reaction is a lipid X + a UDP-2-N,3-O-bis[(3R)-3-hydroxyacyl]-alpha-D-glucosamine = a lipid A disaccharide + UDP + H(+). The protein operates within bacterial outer membrane biogenesis; LPS lipid A biosynthesis. Its function is as follows. Condensation of UDP-2,3-diacylglucosamine and 2,3-diacylglucosamine-1-phosphate to form lipid A disaccharide, a precursor of lipid A, a phosphorylated glycolipid that anchors the lipopolysaccharide to the outer membrane of the cell. The polypeptide is Lipid-A-disaccharide synthase (Haemophilus influenzae (strain 86-028NP)).